A 283-amino-acid chain; its full sequence is Demethylrebeccamycin-D-glucose O-methyltransferase (283 aa).

Residues S101, Q106, 129–130 (DA), L146, and H151 each bind S-adenosyl-L-methionine.

It belongs to the methyltransferase superfamily. As to quaternary structure, monomer.

The enzyme catalyses 4'-demethylrebeccamycin + S-adenosyl-L-methionine = rebeccamycin + S-adenosyl-L-homocysteine + H(+). Functionally, glycosyl O-methyltransferase that catalyzes the final step in the biosynthesis of rebeccamycin, an indolocarbazole alkaloid that inhibits topoisomerase 1. Has broad substrate specificity and functions as glycosyl O-methyltransferase on a number of rebeccamycin analogs. The chain is Demethylrebeccamycin-D-glucose O-methyltransferase (rebM) from Lentzea aerocolonigenes (Lechevalieria aerocolonigenes).